Consider the following 288-residue polypeptide: L-xylulose reductase (288 aa).

Isoleucine 39, asparagine 113, and lysine 147 together coordinate NADP(+). The active-site Proton donor is the serine 181. Positions 196, 200, 228, and 230 each coordinate NADP(+). Tyrosine 196 acts as the Proton acceptor in catalysis. Residue lysine 200 is the Lowers pKa of active site Tyr of the active site.

Belongs to the short-chain dehydrogenases/reductases (SDR) family.

The catalysed reaction is xylitol + NADP(+) = L-xylulose + NADPH + H(+). It participates in carbohydrate degradation; L-arabinose degradation via L-arabinitol; D-xylulose 5-phosphate from L-arabinose (fungal route): step 3/5. Functionally, L-xylulose reductase involved in the catabolism of L-arabinose through an oxidoreductive pathway. Catalyzes the NADPH-dependent reduction of L-xylulose. Is also able to convert D-xylulose, D-ribulose, L-sorbose, and D-fructose to their corresponding polyols. This chain is L-xylulose reductase, found in Hypocrea jecorina (strain QM6a) (Trichoderma reesei).